The following is a 198-amino-acid chain: uncharacterized protein (198 aa).

Disordered stretches follow at residues 15–69 (RLGQ…KDTR) and 172–198 (FSVK…LWGL). Basic and acidic residues-rich tracts occupy residues 37–49 (HKSF…DQSR) and 56–69 (FNEK…KDTR). Low complexity predominate over residues 176–186 (ESSNLSNNDSD). A compositionally biased stretch (acidic residues) spans 187-198 (ASLDEDTLLWGL).

The protein localises to the nucleus. This is an uncharacterized protein from Schizosaccharomyces pombe (strain 972 / ATCC 24843) (Fission yeast).